Reading from the N-terminus, the 435-residue chain is Protein phosphatase 2C homolog 2 (435 aa).

The region spanning 23–298 (IYGVSAMQGW…DNMTMIIIGL (276 aa)) is the PPM-type phosphatase domain. Mn(2+) contacts are provided by Asp71, Gly72, Asp240, and Asp289. The interval 366-435 (DQTEEDRDLP…TSGAPEKSTS (70 aa)) is disordered. Over residues 381-392 (ELPDSARNEREG) the composition is skewed to basic and acidic residues. Residues 409–418 (GSSASTSEST) show a composition bias toward low complexity. The segment covering 419-435 (VTPAGSSTSGAPEKSTS) has biased composition (polar residues).

It belongs to the PP2C family. Requires Mg(2+) as cofactor. Mn(2+) is required as a cofactor.

The protein localises to the cytoplasm. Its subcellular location is the nucleus. It catalyses the reaction O-phospho-L-seryl-[protein] + H2O = L-seryl-[protein] + phosphate. The catalysed reaction is O-phospho-L-threonyl-[protein] + H2O = L-threonyl-[protein] + phosphate. Dephosphorylating regulator for many key proteins. Dephosphorylates phosphoglycerate kinase pgk1 at least on 'Ser-203' to negatively regulate targeting of pgk1 to the mitochondrion, thereby negatively regulating production of acetyl-CoA and consequently aflatoxin biosynthesis. This chain is Protein phosphatase 2C homolog 2, found in Aspergillus flavus (strain ATCC 200026 / FGSC A1120 / IAM 13836 / NRRL 3357 / JCM 12722 / SRRC 167).